The sequence spans 94 residues: Long neurotoxin LNTX1 (94 aa).

A signal peptide spans 1-21 (MKILLLTLVVVTIMCLDLGYT). Disulfide bonds link C24–C43, C36–C64, C49–C53, C68–C79, and C80–C85.

It belongs to the three-finger toxin family. Long-chain subfamily. Type II alpha-neurotoxin sub-subfamily. As to quaternary structure, monomer. As to expression, expressed by the venom gland.

It localises to the secreted. In terms of biological role, binds with high affinity to muscular (alpha-1/CHRNA1) and neuronal (alpha-7/CHRNA7) nicotinic acetylcholine receptor (nAChR) and inhibits acetylcholine from binding to the receptor, thereby impairing neuromuscular and neuronal transmission. Recombinant LNTX1 leads to a functional block of the muscle-type acetylcholine receptors. Has a cytotoxic activity. The sequence is that of Long neurotoxin LNTX1 from Ophiophagus hannah (King cobra).